The chain runs to 219 residues: Probable GTP-binding protein EngB (219 aa).

One can recognise an EngB-type G domain in the interval 31 to 205; that stretch reads VGVEIAFAGR…LSILNEWCHP (175 aa). Residues 39–46, 66–70, 84–87, 151–154, and 184–186 contribute to the GTP site; these read GRSNAGKS, GRTQL, DLPG, TKSD, and FSA. Ser-46 and Thr-68 together coordinate Mg(2+).

Belongs to the TRAFAC class TrmE-Era-EngA-EngB-Septin-like GTPase superfamily. EngB GTPase family. The cofactor is Mg(2+).

Functionally, necessary for normal cell division and for the maintenance of normal septation. This chain is Probable GTP-binding protein EngB, found in Shewanella sp. (strain W3-18-1).